Reading from the N-terminus, the 500-residue chain is Cytochrome P450 71B26 (500 aa).

A helical membrane pass occupies residues 1-21 (MDSIWILSLLFFIIFLLLAAF). Cys440 lines the heme pocket.

This sequence belongs to the cytochrome P450 family. It depends on heme as a cofactor.

The protein resides in the membrane. The chain is Cytochrome P450 71B26 (CYP71B26) from Arabidopsis thaliana (Mouse-ear cress).